Here is a 298-residue protein sequence, read N- to C-terminus: MPEGKIIKALSGFYYVLDESQESGKVVQCRARGIFRKNKITPLVGDYVVYQADNDKEGYLLEVKERTNELVRPPISNVDQAVLVFSAAEPTFSTSLLDRFLVLVEANHIEPIICITKMDLLKTDEERETIMAYADDYRQIGYEVHLTSTIEGDGIEKLTPHFHNKITVFAGQSGVGKSSLLNAMSPELALKTDDISSHLGRGKHTTRHVELIRTANGLIADTPGFSSLEFTGIEAEDLGLYFLDIRDRSGDCKFRGCLHVKEPGCAIKDAVEHDQIKEYRYQHYLEFLTEIKDRKPRY.

Residues 67-228 (TNELVRPPIS…IADTPGFSSL (162 aa)) form the CP-type G domain. Residues 116 to 119 (TKMD) and 171 to 179 (GQSGVGKSS) each bind GTP. Residues C252, C257, H259, and C265 each contribute to the Zn(2+) site.

This sequence belongs to the TRAFAC class YlqF/YawG GTPase family. RsgA subfamily. In terms of assembly, monomer. Associates with 30S ribosomal subunit, binds 16S rRNA. It depends on Zn(2+) as a cofactor.

Its subcellular location is the cytoplasm. Functionally, one of several proteins that assist in the late maturation steps of the functional core of the 30S ribosomal subunit. Helps release RbfA from mature subunits. May play a role in the assembly of ribosomal proteins into the subunit. Circularly permuted GTPase that catalyzes slow GTP hydrolysis, GTPase activity is stimulated by the 30S ribosomal subunit. This is Small ribosomal subunit biogenesis GTPase RsgA from Bacillus pumilus (strain SAFR-032).